Reading from the N-terminus, the 384-residue chain is S-adenosylmethionine synthase (384 aa).

Residue histidine 15 participates in ATP binding. Aspartate 17 contacts Mg(2+). Residue glutamate 43 participates in K(+) binding. The L-methionine site is built by glutamate 56 and glutamine 99. The flexible loop stretch occupies residues 99–109 (QSPDINQGVDR). ATP contacts are provided by residues 164 to 166 (DAK), 230 to 231 (RF), aspartate 239, 245 to 246 (RK), alanine 262, and lysine 266. Position 239 (aspartate 239) interacts with L-methionine. Lysine 270 contributes to the L-methionine binding site.

It belongs to the AdoMet synthase family. Homotetramer; dimer of dimers. Mg(2+) is required as a cofactor. K(+) serves as cofactor.

It localises to the cytoplasm. The catalysed reaction is L-methionine + ATP + H2O = S-adenosyl-L-methionine + phosphate + diphosphate. It functions in the pathway amino-acid biosynthesis; S-adenosyl-L-methionine biosynthesis; S-adenosyl-L-methionine from L-methionine: step 1/1. Functionally, catalyzes the formation of S-adenosylmethionine (AdoMet) from methionine and ATP. The overall synthetic reaction is composed of two sequential steps, AdoMet formation and the subsequent tripolyphosphate hydrolysis which occurs prior to release of AdoMet from the enzyme. In Shigella boydii serotype 18 (strain CDC 3083-94 / BS512), this protein is S-adenosylmethionine synthase.